The sequence spans 451 residues: Phosphoglucosamine mutase (451 aa).

The active-site Phosphoserine intermediate is serine 102. The Mg(2+) site is built by serine 102, aspartate 242, aspartate 244, and aspartate 246. Serine 102 is subject to Phosphoserine.

This sequence belongs to the phosphohexose mutase family. Mg(2+) serves as cofactor. Post-translationally, activated by phosphorylation.

It carries out the reaction alpha-D-glucosamine 1-phosphate = D-glucosamine 6-phosphate. In terms of biological role, catalyzes the conversion of glucosamine-6-phosphate to glucosamine-1-phosphate. In Staphylococcus saprophyticus subsp. saprophyticus (strain ATCC 15305 / DSM 20229 / NCIMB 8711 / NCTC 7292 / S-41), this protein is Phosphoglucosamine mutase.